A 308-amino-acid polypeptide reads, in one-letter code: Homoserine O-succinyltransferase (308 aa).

The Acyl-thioester intermediate role is filled by cysteine 142. Substrate-binding residues include lysine 163 and serine 192. The active-site Proton acceptor is histidine 235. Glutamate 237 is an active-site residue. Arginine 249 is a binding site for substrate.

It belongs to the MetA family.

The protein localises to the cytoplasm. It catalyses the reaction L-homoserine + succinyl-CoA = O-succinyl-L-homoserine + CoA. The protein operates within amino-acid biosynthesis; L-methionine biosynthesis via de novo pathway; O-succinyl-L-homoserine from L-homoserine: step 1/1. Transfers a succinyl group from succinyl-CoA to L-homoserine, forming succinyl-L-homoserine. The sequence is that of Homoserine O-succinyltransferase from Pseudoalteromonas atlantica (strain T6c / ATCC BAA-1087).